We begin with the raw amino-acid sequence, 153 residues long: Endoribonuclease YbeY (153 aa).

Positions 118, 122, and 128 each coordinate Zn(2+).

It belongs to the endoribonuclease YbeY family. Zn(2+) is required as a cofactor.

The protein resides in the cytoplasm. Functionally, single strand-specific metallo-endoribonuclease involved in late-stage 70S ribosome quality control and in maturation of the 3' terminus of the 16S rRNA. The polypeptide is Endoribonuclease YbeY (Chloroflexus aggregans (strain MD-66 / DSM 9485)).